The following is a 1086-amino-acid chain: Endo-1,4-beta-xylanase C (1086 aa).

A signal peptide spans 1-31 (MRGKWLRLCLAAVLIVSLLPGLGAGEWKASA). CBM-cenC domains lie at 35–183 (GDIL…IRLV) and 197–359 (GQAL…ITAT). Residues 365 to 710 (EKNIPDLAKK…KPAYWALVDP (346 aa)) form the GH10 domain. Glu502 functions as the Proton donor in the catalytic mechanism. The active site involves Asp556. Residue Glu620 is the Nucleophile of the active site.

The protein belongs to the glycosyl hydrolase 10 (cellulase F) family.

The catalysed reaction is Endohydrolysis of (1-&gt;4)-beta-D-xylosidic linkages in xylans.. It participates in glycan degradation; xylan degradation. Functionally, endoxylanase with high hydrolytic activity on birchwood and oat spelt xylan. Xylotetraose, xylotriose, xylobiose and xylose are the main products from birchwood xylan hydrolysis. Shows increasing activity on xylo-oligosaccharides of increasing length. Displays very low hydrolytic activity on Avicel, carboxymethylcellulose (CMC) and p-nitrophenyl-beta-xylopyranoside. Also shows transxylosidase activity, allowing the formation of xylo-oligosaccharides of higher degree of polymerization than the starting substrate. This chain is Endo-1,4-beta-xylanase C (xynC), found in Paenibacillus barcinonensis.